The sequence spans 100 residues: Protein Tat (100 aa).

The interval 1-20 (MEPVNPSLEPWKHPGSQPKT) is disordered. The tract at residues 1–24 (MEPVNPSLEPWKHPGSQPKTACTN) is interaction with human CREBBP. The tract at residues 1-48 (MEPVNPSLEPWKHPGSQPKTACTNCYCKKCCFHCQACFITKGLGISYG) is transactivation. Positions 22, 25, and 27 each coordinate Zn(2+). The segment at 22-37 (CTNCYCKKCCFHCQAC) is cysteine-rich. K28 carries the N6-acetyllysine; by host PCAF modification. C30, H33, C34, and C37 together coordinate Zn(2+). The tract at residues 38–48 (FITKGLGISYG) is core. The tract at residues 47 to 100 (YGRKKRRQRRRPPQDSQTHQVSLSKPSSQPRGDPTGPKEQKKKVERETETDPVH) is disordered. The span at 48 to 57 (GRKKRRQRRR) shows a compositional bias: basic residues. Residues 49 to 57 (RKKRRQRRR) carry the Nuclear localization signal, RNA-binding (TAR), and protein transduction motif. Residues 49-85 (RKKRRQRRRPPQDSQTHQVSLSKPSSQPRGDPTGPKE) form an interaction with the host capping enzyme RNGTT region. Residues K50 and K51 each carry the N6-acetyllysine; by host EP300 and GCN5L2 modification. 2 positions are modified to asymmetric dimethylarginine; by host PRMT6: R52 and R53. The span at 61 to 76 (DSQTHQVSLSKPSSQP) shows a compositional bias: polar residues. K71 is covalently cross-linked (Glycyl lysine isopeptide (Lys-Gly) (interchain with G-Cter in ubiquitin)). The Cell attachment site signature appears at 77–79 (RGD). Over residues 82 to 100 (GPKEQKKKVERETETDPVH) the composition is skewed to basic and acidic residues.

This sequence belongs to the lentiviruses Tat family. As to quaternary structure, interacts with host CCNT1. Associates with the P-TEFb complex composed at least of Tat, P-TEFb (CDK9 and CCNT1), TAR RNA, RNA Pol II. Recruits the HATs CREBBP, TAF1/TFIID, EP300, PCAF and GCN5L2. Interacts with host KAT5/Tip60; this interaction targets the latter to degradation. Interacts with the host deacetylase SIRT1. Interacts with host capping enzyme RNGTT; this interaction stimulates RNGTT. Binds to host KDR, and to the host integrins ITGAV/ITGB3 and ITGA5/ITGB1. Interacts with host KPNB1/importin beta-1 without previous binding to KPNA1/importin alpha-1. Interacts with EIF2AK2. Interacts with host nucleosome assembly protein NAP1L1; this interaction may be required for the transport of Tat within the nucleus, since the two proteins interact at the nuclear rim. Interacts with host C1QBP/SF2P32; this interaction involves lysine-acetylated Tat. Interacts with the host chemokine receptors CCR2, CCR3 and CXCR4. Interacts with host DPP4/CD26; this interaction may trigger an anti-proliferative effect. Interacts with host LDLR. Interacts with the host extracellular matrix metalloproteinase MMP1. Interacts with host PRMT6; this interaction mediates Tat's methylation. Interacts with, and is ubiquitinated by MDM2/Hdm2. Interacts with host PSMC3 and HTATIP2. Interacts with STAB1; this interaction may overcome SATB1-mediated repression of IL2 and IL2RA (interleukin) in T cells by binding to the same domain than HDAC1. Interacts (when acetylated) with human CDK13, thereby increasing HIV-1 mRNA splicing and promoting the production of the doubly spliced HIV-1 protein Nef. Interacts with host TBP; this interaction modulates the activity of transcriptional pre-initiation complex. Interacts with host RELA. Interacts with host PLSCR1; this interaction negatively regulates Tat transactivation activity by altering its subcellular distribution. Post-translationally, asymmetrical arginine methylation by host PRMT6 seems to diminish the transactivation capacity of Tat and affects the interaction with host CCNT1. In terms of processing, acetylation by EP300, CREBBP, GCN5L2/GCN5 and PCAF regulates the transactivation activity of Tat. EP300-mediated acetylation of Lys-50 promotes dissociation of Tat from the TAR RNA through the competitive binding to PCAF's bromodomain. In addition, the non-acetylated Tat's N-terminus can also interact with PCAF. PCAF-mediated acetylation of Lys-28 enhances Tat's binding to CCNT1. Lys-50 is deacetylated by SIRT1. Polyubiquitination by host MDM2 does not target Tat to degradation, but activates its transactivation function and fosters interaction with CCNT1 and TAR RNA. Post-translationally, phosphorylated by EIF2AK2 on serine and threonine residues adjacent to the basic region important for TAR RNA binding and function. Phosphorylation of Tat by EIF2AK2 is dependent on the prior activation of EIF2AK2 by dsRNA.

The protein resides in the host nucleus. It localises to the host nucleolus. The protein localises to the host cytoplasm. Its subcellular location is the secreted. Transcriptional activator that increases RNA Pol II processivity, thereby increasing the level of full-length viral transcripts. Recognizes a hairpin structure at the 5'-LTR of the nascent viral mRNAs referred to as the transactivation responsive RNA element (TAR) and recruits the cyclin T1-CDK9 complex (P-TEFb complex) that will in turn hyperphosphorylate the RNA polymerase II to allow efficient elongation. The CDK9 component of P-TEFb and other Tat-activated kinases hyperphosphorylate the C-terminus of RNA Pol II that becomes stabilized and much more processive. Other factors such as HTATSF1/Tat-SF1, SUPT5H/SPT5, and HTATIP2 are also important for Tat's function. Besides its effect on RNA Pol II processivity, Tat induces chromatin remodeling of proviral genes by recruiting the histone acetyltransferases (HATs) CREBBP, EP300 and PCAF to the chromatin. This also contributes to the increase in proviral transcription rate, especially when the provirus integrates in transcriptionally silent region of the host genome. To ensure maximal activation of the LTR, Tat mediates nuclear translocation of NF-kappa-B by interacting with host RELA. Through its interaction with host TBP, Tat may also modulate transcription initiation. Tat can reactivate a latently infected cell by penetrating in it and transactivating its LTR promoter. In the cytoplasm, Tat is thought to act as a translational activator of HIV-1 mRNAs. In terms of biological role, extracellular circulating Tat can be endocytosed by surrounding uninfected cells via the binding to several surface receptors such as CD26, CXCR4, heparan sulfate proteoglycans (HSPG) or LDLR. Neurons are rarely infected, but they internalize Tat via their LDLR. Through its interaction with nuclear HATs, Tat is potentially able to control the acetylation-dependent cellular gene expression. Modulates the expression of many cellular genes involved in cell survival, proliferation or in coding for cytokines or cytokine receptors. Tat plays a role in T-cell and neurons apoptosis. Tat induced neurotoxicity and apoptosis probably contribute to neuroAIDS. Circulating Tat also acts as a chemokine-like and/or growth factor-like molecule that binds to specific receptors on the surface of the cells, affecting many cellular pathways. In the vascular system, Tat binds to ITGAV/ITGB3 and ITGA5/ITGB1 integrins dimers at the surface of endothelial cells and competes with bFGF for heparin-binding sites, leading to an excess of soluble bFGF. The polypeptide is Protein Tat (Homo sapiens (Human)).